Reading from the N-terminus, the 80-residue chain is MAAKKPENMAFEAALDELDSIVNELESGDIALEDALKKFERGIMLARTSQKKLTQAEQRVEILLQADDEAPLTEFNENNE.

The protein belongs to the XseB family. In terms of assembly, heterooligomer composed of large and small subunits.

It is found in the cytoplasm. It carries out the reaction Exonucleolytic cleavage in either 5'- to 3'- or 3'- to 5'-direction to yield nucleoside 5'-phosphates.. In terms of biological role, bidirectionally degrades single-stranded DNA into large acid-insoluble oligonucleotides, which are then degraded further into small acid-soluble oligonucleotides. This Photobacterium profundum (strain SS9) protein is Exodeoxyribonuclease 7 small subunit.